A 431-amino-acid polypeptide reads, in one-letter code: Glutamate-1-semialdehyde 2,1-aminomutase (431 aa).

N6-(pyridoxal phosphate)lysine is present on lysine 265.

This sequence belongs to the class-III pyridoxal-phosphate-dependent aminotransferase family. HemL subfamily. Homodimer. Requires pyridoxal 5'-phosphate as cofactor.

It localises to the cytoplasm. The catalysed reaction is (S)-4-amino-5-oxopentanoate = 5-aminolevulinate. It participates in porphyrin-containing compound metabolism; protoporphyrin-IX biosynthesis; 5-aminolevulinate from L-glutamyl-tRNA(Glu): step 2/2. In Aliivibrio fischeri (strain ATCC 700601 / ES114) (Vibrio fischeri), this protein is Glutamate-1-semialdehyde 2,1-aminomutase.